The chain runs to 482 residues: Catalase easC (482 aa).

H58 is a catalytic residue. Y347 is a binding site for heme.

It belongs to the catalase family. Heme serves as cofactor.

It participates in alkaloid biosynthesis; ergot alkaloid biosynthesis. Catalase; part of the gene cluster that mediates the biosynthesis of fungal ergot alkaloid. DmaW catalyzes the first step of ergot alkaloid biosynthesis by condensing dimethylallyl diphosphate (DMAP) and tryptophan to form 4-dimethylallyl-L-tryptophan. The second step is catalyzed by the methyltransferase easF that methylates 4-dimethylallyl-L-tryptophan in the presence of S-adenosyl-L-methionine, resulting in the formation of 4-dimethylallyl-L-abrine. The catalase easC and the FAD-dependent oxidoreductase easE then transform 4-dimethylallyl-L-abrine to chanoclavine-I which is further oxidized by easD in the presence of NAD(+), resulting in the formation of chanoclavine-I aldehyde. Chanoclavine-I aldehyde is the precursor of ergoamides and ergopeptines in Clavicipitaceae, and clavine-type alcaloids such as fumiclavine in Trichocomaceae. However, the metabolites downstream of chanoclavine-I aldehyde in Arthrodermataceae have not been identified yet. In Arthroderma otae (strain ATCC MYA-4605 / CBS 113480) (Microsporum canis), this protein is Catalase easC.